The following is a 644-amino-acid chain: Replication protein E1 (644 aa).

The Nuclear localization signal signature appears at 86–88 (KRK). The disordered stretch occupies residues 146–177 (QVESQNGDADLNDSESSGVGASSDVSSETDVD). Over residues 159–173 (SESSGVGASSDVSSE) the composition is skewed to low complexity. Residues 179–345 (CNTVPLQNIS…LTVLQHSFND (167 aa)) form a DNA-binding region region. The region spanning 444 to 594 (IEFTAFLVAF…FPFDANGNPV (151 aa)) is the SF3 helicase domain. 470 to 477 (GPANTGKS) is a binding site for ATP. Lysine 551 is covalently cross-linked (Glycyl lysine isopeptide (Lys-Gly) (interchain with G-Cter in SUMO)).

It belongs to the papillomaviridae E1 protein family. In terms of assembly, can form hexamers. Interacts with E2 protein; this interaction increases E1 DNA binding specificity. Interacts with host DNA polymerase subunit POLA2. Interacts with host single stranded DNA-binding protein RPA1. Interacts with host TOP1; this interaction stimulates the enzymatic activity of TOP1. Post-translationally, phosphorylated. In terms of processing, sumoylated.

The protein resides in the host nucleus. It carries out the reaction Couples ATP hydrolysis with the unwinding of duplex DNA by translocating in the 3'-5' direction.. It catalyses the reaction ATP + H2O = ADP + phosphate + H(+). Its function is as follows. ATP-dependent DNA 3'-5' helicase required for initiation of viral DNA replication. It forms a complex with the viral E2 protein. The E1-E2 complex binds to the replication origin which contains binding sites for both proteins. During the initial step, a dimer of E1 interacts with a dimer of protein E2 leading to a complex that binds the viral origin of replication with high specificity. Then, a second dimer of E1 displaces the E2 dimer in an ATP-dependent manner to form the E1 tetramer. Following this, two E1 monomers are added to each half of the site, which results in the formation of two E1 trimers on the viral ori. Subsequently, two hexamers will be created. The double hexamer acts as a bi-directional helicase machinery and unwinds the viral DNA and then recruits the host DNA polymerase to start replication. The chain is Replication protein E1 from Homo sapiens (Human).